Here is a 251-residue protein sequence, read N- to C-terminus: Phosphosulfolactate synthase (251 aa).

This sequence belongs to the phosphosulfolactate synthase family. In terms of assembly, homotrimer. The cofactor is Mg(2+).

It catalyses the reaction (2R)-O-phospho-3-sulfolactate = phosphoenolpyruvate + sulfite + H(+). It participates in cofactor biosynthesis; coenzyme M biosynthesis; sulfoacetaldehyde from phosphoenolpyruvate and sulfite: step 1/4. In terms of biological role, catalyzes the addition of sulfite to phosphoenolpyruvate (PEP) to yield (2R)-phospho-3-sulfolactate (PSL). The protein is Phosphosulfolactate synthase (comA) of Methanocaldococcus jannaschii (strain ATCC 43067 / DSM 2661 / JAL-1 / JCM 10045 / NBRC 100440) (Methanococcus jannaschii).